The sequence spans 109 residues: Nucleoid-associated protein Spro_1136 (109 aa).

Disordered stretches follow at residues 1 to 21 (MFGK…QEKM) and 90 to 109 (EKMA…KMPF). The segment covering 11–21 (MKQAQQMQEKM) has biased composition (low complexity).

This sequence belongs to the YbaB/EbfC family. Homodimer.

It is found in the cytoplasm. Its subcellular location is the nucleoid. Its function is as follows. Binds to DNA and alters its conformation. May be involved in regulation of gene expression, nucleoid organization and DNA protection. This chain is Nucleoid-associated protein Spro_1136, found in Serratia proteamaculans (strain 568).